A 595-amino-acid polypeptide reads, in one-letter code: Flap endonuclease 1 (595 aa).

Positions 1-106 are N-domain; it reads MGIKGLTKFI…SELEKRGEKR (106 aa). Mg(2+) is bound at residue aspartate 34. Residues arginine 47 and arginine 72 each coordinate DNA. Mg(2+) contacts are provided by aspartate 88, glutamate 160, glutamate 162, aspartate 181, and aspartate 183. The I-domain stretch occupies residues 124-267; sequence EIKKQSGRTV…KTAYNLIKEY (144 aa). Glutamate 160 provides a ligand contact to DNA. Glycine 245 and aspartate 247 together coordinate DNA. A Mg(2+)-binding site is contributed by aspartate 247. Residues 350–358 are interaction with PCNA; the sequence is TQRRLDNFF. Residues 370–493 are disordered; the sequence is NEESQIKKEV…TGDVYSFPNG (124 aa). Over residues 392 to 401 the composition is skewed to polar residues; that stretch reads NDSSTKLNSK. Basic and acidic residues predominate over residues 406 to 425; the sequence is PKGEKESKTEKDDGDTHNGN. Acidic residues predominate over residues 426–436; sequence DNEEEGGEGET. Basic and acidic residues predominate over residues 461-475; the sequence is HKSDSESGNVKKEST.

It belongs to the XPG/RAD2 endonuclease family. FEN1 subfamily. In terms of assembly, interacts with PCNA. Three molecules of FEN1 bind to one PCNA trimer with each molecule binding to one PCNA monomer. PCNA stimulates the nuclease activity without altering cleavage specificity. Mg(2+) serves as cofactor. Post-translationally, phosphorylated. Phosphorylation upon DNA damage induces relocalization to the nuclear plasma.

It is found in the nucleus. Its subcellular location is the nucleolus. The protein localises to the nucleoplasm. The protein resides in the mitochondrion. Its function is as follows. Structure-specific nuclease with 5'-flap endonuclease and 5'-3' exonuclease activities involved in DNA replication and repair. During DNA replication, cleaves the 5'-overhanging flap structure that is generated by displacement synthesis when DNA polymerase encounters the 5'-end of a downstream Okazaki fragment. It enters the flap from the 5'-end and then tracks to cleave the flap base, leaving a nick for ligation. Also involved in the long patch base excision repair (LP-BER) pathway, by cleaving within the apurinic/apyrimidinic (AP) site-terminated flap. Acts as a genome stabilization factor that prevents flaps from equilibrating into structures that lead to duplications and deletions. Also possesses 5'-3' exonuclease activity on nicked or gapped double-stranded DNA, and exhibits RNase H activity. Also involved in replication and repair of rDNA and in repairing mitochondrial DNA. The sequence is that of Flap endonuclease 1 from Plasmodium knowlesi (strain H).